Reading from the N-terminus, the 358-residue chain is Ribosomal RNA large subunit methyltransferase M (358 aa).

Residues serine 183, 216–219 (APGG), aspartate 235, aspartate 255, and aspartate 271 contribute to the S-adenosyl-L-methionine site. The active-site Proton acceptor is the lysine 300.

It belongs to the class I-like SAM-binding methyltransferase superfamily. RNA methyltransferase RlmE family. RlmM subfamily. As to quaternary structure, monomer.

Its subcellular location is the cytoplasm. The catalysed reaction is cytidine(2498) in 23S rRNA + S-adenosyl-L-methionine = 2'-O-methylcytidine(2498) in 23S rRNA + S-adenosyl-L-homocysteine + H(+). Catalyzes the 2'-O-methylation at nucleotide C2498 in 23S rRNA. This Pseudomonas fluorescens (strain SBW25) protein is Ribosomal RNA large subunit methyltransferase M.